The primary structure comprises 228 residues: Phosphatidylserine decarboxylase proenzyme (228 aa).

Catalysis depends on serine 197, which acts as the Schiff-base intermediate with substrate; via pyruvic acid. The residue at position 197 (serine 197) is a Pyruvic acid (Ser); by autocatalysis.

Belongs to the phosphatidylserine decarboxylase family. PSD-A subfamily. Heterodimer of a large membrane-associated beta subunit and a small pyruvoyl-containing alpha subunit. Pyruvate serves as cofactor. In terms of processing, is synthesized initially as an inactive proenzyme. Formation of the active enzyme involves a self-maturation process in which the active site pyruvoyl group is generated from an internal serine residue via an autocatalytic post-translational modification. Two non-identical subunits are generated from the proenzyme in this reaction, and the pyruvate is formed at the N-terminus of the alpha chain, which is derived from the carboxyl end of the proenzyme. The post-translation cleavage follows an unusual pathway, termed non-hydrolytic serinolysis, in which the side chain hydroxyl group of the serine supplies its oxygen atom to form the C-terminus of the beta chain, while the remainder of the serine residue undergoes an oxidative deamination to produce ammonia and the pyruvoyl prosthetic group on the alpha chain.

Its subcellular location is the cell membrane. The enzyme catalyses a 1,2-diacyl-sn-glycero-3-phospho-L-serine + H(+) = a 1,2-diacyl-sn-glycero-3-phosphoethanolamine + CO2. The protein operates within phospholipid metabolism; phosphatidylethanolamine biosynthesis; phosphatidylethanolamine from CDP-diacylglycerol: step 2/2. Its function is as follows. Catalyzes the formation of phosphatidylethanolamine (PtdEtn) from phosphatidylserine (PtdSer). This Bacteroides thetaiotaomicron (strain ATCC 29148 / DSM 2079 / JCM 5827 / CCUG 10774 / NCTC 10582 / VPI-5482 / E50) protein is Phosphatidylserine decarboxylase proenzyme.